The chain runs to 364 residues: Alanine racemase (364 aa).

Lys35 acts as the Proton acceptor; specific for D-alanine in catalysis. Residue Lys35 is modified to N6-(pyridoxal phosphate)lysine. Residue Arg131 coordinates substrate. The Proton acceptor; specific for L-alanine role is filled by Tyr256. Met304 contacts substrate.

The protein belongs to the alanine racemase family. Pyridoxal 5'-phosphate is required as a cofactor.

It carries out the reaction L-alanine = D-alanine. It functions in the pathway amino-acid biosynthesis; D-alanine biosynthesis; D-alanine from L-alanine: step 1/1. Catalyzes the interconversion of L-alanine and D-alanine. May also act on other amino acids. The chain is Alanine racemase (alr) from Chromohalobacter salexigens (strain ATCC BAA-138 / DSM 3043 / CIP 106854 / NCIMB 13768 / 1H11).